The primary structure comprises 228 residues: Cytidylate kinase (228 aa).

ATP is bound at residue 17-25; that stretch reads GPTASGKGT.

This sequence belongs to the cytidylate kinase family. Type 1 subfamily.

It localises to the cytoplasm. The catalysed reaction is CMP + ATP = CDP + ADP. It carries out the reaction dCMP + ATP = dCDP + ADP. This chain is Cytidylate kinase, found in Burkholderia mallei (strain NCTC 10247).